We begin with the raw amino-acid sequence, 275 residues long: Cell division protein FtsQ (275 aa).

A disordered region spans residues 1 to 20 (MRDLHKKKPRPVTQNRLKKP). At 1–38 (MRDLHKKKPRPVTQNRLKKPPKTCKPINYRGILKKTAK) the chain is on the cytoplasmic side. The chain crosses the membrane as a helical span at residues 39–61 (VVGGAALISAVGCAGYGIYRIIA). The Periplasmic portion of the chain corresponds to 62-275 (GTTFFKLERI…YSDKIIVKKV (214 aa)). Residues 66 to 134 (FKLERIEVSE…NTLSMQIAER (69 aa)) enclose the POTRA domain.

This sequence belongs to the FtsQ/DivIB family. FtsQ subfamily.

The protein localises to the cell inner membrane. In terms of biological role, essential cell division protein. This chain is Cell division protein FtsQ, found in Geotalea daltonii (strain DSM 22248 / JCM 15807 / FRC-32) (Geobacter daltonii).